Reading from the N-terminus, the 929-residue chain is Probable LRR receptor-like serine/threonine-protein kinase At1g67720 (929 aa).

Positions 1 to 21 (MGLCLAQLAVTCLFLVPFVLS) are cleaved as a signal peptide. At 22–531 (QVTEFVSIDC…NEAQRKHFWQ (510 aa)) the chain is on the extracellular side. N36, N173, N236, N293, N320, N332, and N407 each carry an N-linked (GlcNAc...) asparagine glycan. LRR repeat units lie at residues 413–437 (PPRVTKIALSRKNLRGEIPPGINYM), 438–460 (EALTELWLDDNELTGTLPDMSKL), 461–484 (VNLKIMHLENNQLSGSLPPYLAHL), and 485–508 (PNLQELSIENNSFKGKIPSALLKG). N494 carries an N-linked (GlcNAc...) asparagine glycan. A helical transmembrane segment spans residues 532–552 (ILGISIAAVAILLLLVGGSLV). The Cytoplasmic segment spans residues 553–929 (LLCALRKTKR…SRNSLAPAAR (377 aa)). A Protein kinase domain is found at 606 to 880 (DNFSKKVGRG…EVIVAIQDAI (275 aa)). Residues 612-620 (VGRGSFGSV) and K634 each bind ATP. A Phosphotyrosine modification is found at Y679. Residue D731 is the Proton acceptor of the active site. S735 and S764 each carry phosphoserine. The residue at position 770 (T770) is a Phosphothreonine. Residue Y778 is modified to Phosphotyrosine.

This sequence belongs to the protein kinase superfamily. Ser/Thr protein kinase family.

Its subcellular location is the membrane. It carries out the reaction L-seryl-[protein] + ATP = O-phospho-L-seryl-[protein] + ADP + H(+). It catalyses the reaction L-threonyl-[protein] + ATP = O-phospho-L-threonyl-[protein] + ADP + H(+). This Arabidopsis thaliana (Mouse-ear cress) protein is Probable LRR receptor-like serine/threonine-protein kinase At1g67720.